Reading from the N-terminus, the 283-residue chain is NFU1 iron-sulfur cluster scaffold homolog, mitochondrial (283 aa).

The N-terminal 65 residues, 1 to 65 (MSKFLSQAAI…ELRMPVACRR (65 aa)), are a transit peptide targeting the mitochondrion. The nifU stretch occupies residues 182-250 (IKELLDTRIR…IPEVESVEQV (69 aa)). [4Fe-4S] cluster is bound by residues Cys219 and Cys222.

This sequence belongs to the NifU family.

It is found in the mitochondrion. Functionally, molecular scaffold for [Fe-S] cluster assembly of mitochondrial iron-sulfur proteins. This Drosophila simulans (Fruit fly) protein is NFU1 iron-sulfur cluster scaffold homolog, mitochondrial.